We begin with the raw amino-acid sequence, 768 residues long: uncharacterized protein (768 aa).

The protein to E.coli YkiA.

This is an uncharacterized protein from Escherichia coli (strain K12).